Here is a 211-residue protein sequence, read N- to C-terminus: 2,3-bisphosphoglycerate-dependent phosphoglycerate mutase (211 aa).

Substrate-binding positions include 9–16 (RHGQSDWN), 22–23 (TG), Arg61, 88–91 (ERDY), Lys99, 115–116 (RR), and 159–160 (GN). Catalysis depends on His10, which acts as the Tele-phosphohistidine intermediate. The active-site Proton donor/acceptor is Glu88.

This sequence belongs to the phosphoglycerate mutase family. BPG-dependent PGAM subfamily. As to quaternary structure, homodimer.

It catalyses the reaction (2R)-2-phosphoglycerate = (2R)-3-phosphoglycerate. It functions in the pathway carbohydrate degradation; glycolysis; pyruvate from D-glyceraldehyde 3-phosphate: step 3/5. In terms of biological role, catalyzes the interconversion of 2-phosphoglycerate and 3-phosphoglycerate. The sequence is that of 2,3-bisphosphoglycerate-dependent phosphoglycerate mutase from Rhizobium rhizogenes (strain K84 / ATCC BAA-868) (Agrobacterium radiobacter).